The chain runs to 646 residues: Alkyl/aryl-sulfatase BDS1 (646 aa).

M1 carries the post-translational modification N-acetylmethionine. Zn(2+) is bound by residues H162, H164, D166, H167, E273, E292, and H337.

The protein belongs to the metallo-beta-lactamase superfamily. Type III sulfatase family. Zn(2+) serves as cofactor.

In terms of biological role, alkyl/aryl-sulfatase. Enables the use of SDS and 4-nitrocatechol as sulfur source. This is Alkyl/aryl-sulfatase BDS1 (BDS1) from Saccharomyces cerevisiae (strain ATCC 204508 / S288c) (Baker's yeast).